The chain runs to 348 residues: Nicotinate-nucleotide--dimethylbenzimidazole phosphoribosyltransferase (348 aa).

The active-site Proton acceptor is Glu317.

This sequence belongs to the CobT family.

The catalysed reaction is 5,6-dimethylbenzimidazole + nicotinate beta-D-ribonucleotide = alpha-ribazole 5'-phosphate + nicotinate + H(+). The protein operates within nucleoside biosynthesis; alpha-ribazole biosynthesis; alpha-ribazole from 5,6-dimethylbenzimidazole: step 1/2. Catalyzes the synthesis of alpha-ribazole-5'-phosphate from nicotinate mononucleotide (NAMN) and 5,6-dimethylbenzimidazole (DMB). The polypeptide is Nicotinate-nucleotide--dimethylbenzimidazole phosphoribosyltransferase (Clostridioides difficile (strain 630) (Peptoclostridium difficile)).